A 61-amino-acid chain; its full sequence is uncharacterized protein (61 aa).

Helical transmembrane passes span 5–25 (MLYFLIYFAVTHLPSLISLLL) and 29–49 (YILTLLFIVLHILFIWLPWYT).

Its subcellular location is the membrane. This is an uncharacterized protein from Saccharomyces cerevisiae (strain ATCC 204508 / S288c) (Baker's yeast).